The following is a 125-amino-acid chain: Small ribosomal subunit protein uS12m (125 aa).

This sequence belongs to the universal ribosomal protein uS12 family.

The protein resides in the mitochondrion. Protein S12 is involved in the translation initiation step. The chain is Small ribosomal subunit protein uS12m (RPS12) from Allium cepa (Onion).